The primary structure comprises 86 residues: Large ribosomal subunit protein bL31B (86 aa).

This sequence belongs to the bacterial ribosomal protein bL31 family. Type B subfamily. Part of the 50S ribosomal subunit.

This chain is Large ribosomal subunit protein bL31B, found in Streptococcus agalactiae serotype Ia (strain ATCC 27591 / A909 / CDC SS700).